An 85-amino-acid chain; its full sequence is Platelet factor 4 (85 aa).

2 cysteine pairs are disulfide-bonded: Cys25–Cys51 and Cys27–Cys67. Ser41 is modified (phosphoserine). 76–82 (KKIIKRL) contacts heparin.

The protein belongs to the intercrine alpha (chemokine CxC) family. As to quaternary structure, homotetramer. Interacts with TNFAIP6 (via Link domain). Interacts with CCR1. Interacts with CXCR3. Interacts with THBD; this interaction enhances generation of activated protein C.

Its subcellular location is the secreted. Chemokine released during platelet aggregation that plays a role in different biological processes including hematopoiesis, cell proliferation, differentiation, and activation. Acts via different functional receptors including CCR1, CXCR3A or CXCR3B. Upon interaction with CXCR3A receptor, induces activated T-lymphocytes migration mediated via downstream Ras/extracellular signal-regulated kinase (ERK) signaling. Neutralizes the anticoagulant effect of heparin by binding more strongly to heparin than to the chondroitin-4-sulfate chains of the carrier molecule. Plays a role in the inhibition of hematopoiesis and in the maintenance of hematopoietic stem cell (HSC) quiescence. Chemotactic for neutrophils and monocytes via CCR1. Inhibits endothelial cell proliferation. In cooperation with toll-like receptor 8/TLR8, induces chromatin remodeling and activates inflammatory gene expression via the TBK1-IRF5 axis. In addition, induces myofibroblast differentiation and collagen synthesis in different precursor cells, including endothelial cells, by stimulating endothelial-to-mesenchymal transition. Interacts with thrombomodulin/THBD to enhance the activation of protein C and thus potentiates its anticoagulant activity. In Ovis aries (Sheep), this protein is Platelet factor 4 (PF4).